Here is a 32-residue protein sequence, read N- to C-terminus: MSDIN-like toxin proprotein 3 (32 aa).

A propeptide spanning residues 1-10 is cleaved from the precursor; that stretch reads MSDINATRLP. Residues 11–17 constitute a cross-link (cyclopeptide (Val-Pro)); the sequence is VWIGYSP. A propeptide spanning residues 18-32 is cleaved from the precursor; sequence CVGDDAVALLNRGEG.

The protein belongs to the MSDIN fungal toxin family. Post-translationally, processed by the macrocyclase-peptidase enzyme POPB to yield a toxic cyclic heptapeptide. POPB first removes 10 residues from the N-terminus. Conformational trapping of the remaining peptide forces the enzyme to release this intermediate rather than proceed to macrocyclization. The enzyme rebinds the remaining peptide in a different conformation and catalyzes macrocyclization of the N-terminal 7 residues.

In terms of biological role, probable toxin that belongs to the MSDIN-like toxin family responsible for a large number of food poisoning cases and deaths. The sequence is that of MSDIN-like toxin proprotein 3 from Amanita fuligineoides.